A 131-amino-acid chain; its full sequence is NADPH-dependent 7-cyano-7-deazaguanine reductase (131 aa).

Cysteine 47 serves as the catalytic Thioimide intermediate. Catalysis depends on aspartate 54, which acts as the Proton donor. Residues 69-71 and 88-89 each bind substrate; these read MEL and HE.

It belongs to the GTP cyclohydrolase I family. QueF type 1 subfamily.

It is found in the cytoplasm. The catalysed reaction is 7-aminomethyl-7-carbaguanine + 2 NADP(+) = 7-cyano-7-deazaguanine + 2 NADPH + 3 H(+). It functions in the pathway tRNA modification; tRNA-queuosine biosynthesis. Its function is as follows. Catalyzes the NADPH-dependent reduction of 7-cyano-7-deazaguanine (preQ0) to 7-aminomethyl-7-deazaguanine (preQ1). The chain is NADPH-dependent 7-cyano-7-deazaguanine reductase from Microcystis aeruginosa (strain NIES-843 / IAM M-2473).